The following is a 170-amino-acid chain: Shikimate kinase (170 aa).

Position 15-20 (15-20 (GAGKTT)) interacts with ATP. Thr19 provides a ligand contact to Mg(2+). 3 residues coordinate substrate: Asp37, Arg61, and Gly83. Arg121 lines the ATP pocket. Residue Arg140 participates in substrate binding.

This sequence belongs to the shikimate kinase family. As to quaternary structure, monomer. Requires Mg(2+) as cofactor.

Its subcellular location is the cytoplasm. It carries out the reaction shikimate + ATP = 3-phosphoshikimate + ADP + H(+). It participates in metabolic intermediate biosynthesis; chorismate biosynthesis; chorismate from D-erythrose 4-phosphate and phosphoenolpyruvate: step 5/7. Its function is as follows. Catalyzes the specific phosphorylation of the 3-hydroxyl group of shikimic acid using ATP as a cosubstrate. The chain is Shikimate kinase from Neisseria meningitidis serogroup C (strain 053442).